The following is a 210-amino-acid chain: ATP-dependent dethiobiotin synthetase BioD (210 aa).

An ATP-binding site is contributed by 13–18 (GIGKTV). A Mg(2+)-binding site is contributed by Thr17. Residue Lys33 is part of the active site. Glu101 provides a ligand contact to Mg(2+). ATP-binding positions include 101 to 104 (EGAG) and 185 to 187 (PWL).

Belongs to the dethiobiotin synthetase family. As to quaternary structure, homodimer. The cofactor is Mg(2+).

Its subcellular location is the cytoplasm. It carries out the reaction (7R,8S)-7,8-diammoniononanoate + CO2 + ATP = (4R,5S)-dethiobiotin + ADP + phosphate + 3 H(+). The protein operates within cofactor biosynthesis; biotin biosynthesis; biotin from 7,8-diaminononanoate: step 1/2. In terms of biological role, catalyzes a mechanistically unusual reaction, the ATP-dependent insertion of CO2 between the N7 and N8 nitrogen atoms of 7,8-diaminopelargonic acid (DAPA, also called 7,8-diammoniononanoate) to form a ureido ring. This Bradyrhizobium sp. (strain BTAi1 / ATCC BAA-1182) protein is ATP-dependent dethiobiotin synthetase BioD.